Here is a 308-residue protein sequence, read N- to C-terminus: tRNA pseudouridine synthase B (308 aa).

Asp49 serves as the catalytic Nucleophile.

The protein belongs to the pseudouridine synthase TruB family. Type 1 subfamily.

It carries out the reaction uridine(55) in tRNA = pseudouridine(55) in tRNA. Functionally, responsible for synthesis of pseudouridine from uracil-55 in the psi GC loop of transfer RNAs. The sequence is that of tRNA pseudouridine synthase B from Corynebacterium jeikeium (strain K411).